The primary structure comprises 474 residues: RNA-binding protein Nova-1 (474 aa).

Residues 1–12 (MAAAPIQQNGTH) show a composition bias toward polar residues. The disordered stretch occupies residues 1-43 (MAAAPIQQNGTHTGVPIDLDPPDSRKRPLEAPPEAGSTKRTNT). The Bipartite nuclear localization signal signature appears at 26–42 (KRPLEAPPEAGSTKRTN). KH domains are found at residues 48–115 (QYFL…HGFI), 146–212 (IKQV…VELI), and 396–463 (KDVV…QYLI). Positions 394–474 (GSKDVVEIAV…QRITYEQGVR (81 aa)) are required for RNA binding.

In terms of assembly, interacts with PTBP2; the interaction is direct.

The protein localises to the nucleus. Functionally, functions to regulate alternative splicing in neurons by binding pre-mRNA in a sequence-specific manner to activate exon inclusion or exclusion. It binds specifically to the sequences 5'-YCAY-3' and regulates splicing in only a subset of regulated exons. Binding to an exonic 5'-YCAY-3' cluster changes the protein complexes assembled on pre-mRNA, blocking U1 snRNP binding and exon inclusion, whereas binding to an intronic 5'-YCAY-3' cluster enhances spliceosome assembly and exon inclusion. Binding to 5'-YCAY-3' clusters results in a local and asymmetric action to regulate spliceosome assembly and alternative splicing in neurons. Binding to an exonic 5'-YCAY-3' cluster changed the protein complexes assembled on pre-mRNA, blocking U1 snRNP (small nuclear ribonucleoprotein) binding and exon inclusion, whereas binding to an intronic 5'-YCAY-3' cluster enhanced spliceosome assembly and exon inclusion. With NOVA1, they perform unique biological functions in different brain areas and cell types. Autoregulates its own expression by acting as a splicing repressor. Acts to activate the inclusion of exon E3A in the glycine receptor alpha-2 chain and of exon E9 in gamma-aminobutyric-acid receptor gamma-2 subunit via a distal downstream UCAU-rich intronic splicing enhancer. Acts to regulate a novel glycine receptor alpha-2 chain splice variant (alpha-2N) in developing spinal cord. This is RNA-binding protein Nova-1 from Rattus norvegicus (Rat).